A 262-amino-acid polypeptide reads, in one-letter code: Type III pantothenate kinase (262 aa).

5 to 12 contributes to the ATP binding site; sequence DAGNTRSK. Substrate contacts are provided by residues Tyr-102 and 110–113; that span reads GSDR. The active-site Proton acceptor is Asp-112. Asp-132 provides a ligand contact to K(+). Residue Thr-135 participates in ATP binding. Position 190 (Thr-190) interacts with substrate.

It belongs to the type III pantothenate kinase family. Homodimer. It depends on NH4(+) as a cofactor. K(+) serves as cofactor.

It localises to the cytoplasm. The catalysed reaction is (R)-pantothenate + ATP = (R)-4'-phosphopantothenate + ADP + H(+). It functions in the pathway cofactor biosynthesis; coenzyme A biosynthesis; CoA from (R)-pantothenate: step 1/5. Functionally, catalyzes the phosphorylation of pantothenate (Pan), the first step in CoA biosynthesis. The sequence is that of Type III pantothenate kinase from Idiomarina loihiensis (strain ATCC BAA-735 / DSM 15497 / L2-TR).